A 455-amino-acid chain; its full sequence is L-serine dehydratase (455 aa).

The protein belongs to the iron-sulfur dependent L-serine dehydratase family. The cofactor is [4Fe-4S] cluster.

It carries out the reaction L-serine = pyruvate + NH4(+). Its pathway is carbohydrate biosynthesis; gluconeogenesis. This Helicobacter pylori (strain ATCC 700392 / 26695) (Campylobacter pylori) protein is L-serine dehydratase (sdaA).